The sequence spans 504 residues: D-alanine--D-alanyl carrier protein ligase (504 aa).

Residue 152-153 (TS) participates in ATP binding. Aspartate 197 is a binding site for D-alanine. 292 to 297 (NTYGPT) lines the ATP pocket. Valine 301 is a binding site for D-alanine. Residues aspartate 383, 394 to 397 (YNGR), and lysine 492 each bind ATP. Residue lysine 492 coordinates D-alanine.

This sequence belongs to the ATP-dependent AMP-binding enzyme family. DltA subfamily.

It localises to the cytoplasm. It catalyses the reaction holo-[D-alanyl-carrier protein] + D-alanine + ATP = D-alanyl-[D-alanyl-carrier protein] + AMP + diphosphate. The protein operates within cell wall biogenesis; lipoteichoic acid biosynthesis. Catalyzes the first step in the D-alanylation of lipoteichoic acid (LTA), the activation of D-alanine and its transfer onto the D-alanyl carrier protein (Dcp) DltC. In an ATP-dependent two-step reaction, forms a high energy D-alanyl-AMP intermediate, followed by transfer of the D-alanyl residue as a thiol ester to the phosphopantheinyl prosthetic group of the Dcp. D-alanylation of LTA plays an important role in modulating the properties of the cell wall in Gram-positive bacteria, influencing the net charge of the cell wall. In Bacillus cereus (strain ZK / E33L), this protein is D-alanine--D-alanyl carrier protein ligase.